Consider the following 213-residue polypeptide: Orotate phosphoribosyltransferase (213 aa).

Lys26 contributes to the 5-phospho-alpha-D-ribose 1-diphosphate binding site. An orotate-binding site is contributed by Phe34–Phe35. Residues Tyr72 to Lys73, Arg99, Lys100, Lys103, His105, and Asp124 to Ala132 each bind 5-phospho-alpha-D-ribose 1-diphosphate. Positions 128 and 156 each coordinate orotate.

Belongs to the purine/pyrimidine phosphoribosyltransferase family. PyrE subfamily. As to quaternary structure, homodimer. Mg(2+) is required as a cofactor.

The catalysed reaction is orotidine 5'-phosphate + diphosphate = orotate + 5-phospho-alpha-D-ribose 1-diphosphate. The protein operates within pyrimidine metabolism; UMP biosynthesis via de novo pathway; UMP from orotate: step 1/2. Catalyzes the transfer of a ribosyl phosphate group from 5-phosphoribose 1-diphosphate to orotate, leading to the formation of orotidine monophosphate (OMP). This is Orotate phosphoribosyltransferase from Pseudomonas putida (strain W619).